The following is a 291-amino-acid chain: GTPase Era (291 aa).

In terms of domain architecture, Era-type G spans 2–167; it reads KSGFVSIIGR…LDEIVKYLDK (166 aa). The G1 stretch occupies residues 10–17; sequence GRTNAGKS. Residue 10–17 participates in GTP binding; the sequence is GRTNAGKS. A G2 region spans residues 36–40; that stretch reads NATRR. Positions 57 to 60 are G3; that stretch reads DTPG. GTP-binding positions include 57–61 and 116–119; these read DTPGL and NKVD. A G4 region spans residues 116 to 119; that stretch reads NKVD. The tract at residues 146–148 is G5; the sequence is YSS. One can recognise a KH type-2 domain in the interval 186–274; the sequence is YRDFILESIY…LLKLFVTVKK (89 aa).

This sequence belongs to the TRAFAC class TrmE-Era-EngA-EngB-Septin-like GTPase superfamily. Era GTPase family. In terms of assembly, monomer.

The protein resides in the cytoplasm. The protein localises to the cell inner membrane. In terms of biological role, an essential GTPase that binds both GDP and GTP, with rapid nucleotide exchange. Plays a role in 16S rRNA processing and 30S ribosomal subunit biogenesis and possibly also in cell cycle regulation and energy metabolism. This chain is GTPase Era, found in Campylobacter jejuni subsp. jejuni serotype O:6 (strain 81116 / NCTC 11828).